Consider the following 119-residue polypeptide: Thioredoxin H4 (119 aa).

The Thioredoxin domain occupies Ala2 to Gly115. Active-site nucleophile residues include Cys40 and Cys43. A disulfide bond links Cys40 and Cys43.

The protein belongs to the thioredoxin family. Plant H-type subfamily. As to quaternary structure, interacts with MDH1.

The protein localises to the cytoplasm. Functionally, thiol-disulfide oxidoreductase probably involved in the redox regulation of a number of cytosolic enzymes. Possesses insulin disulfide bonds reducing activity. The protein is Thioredoxin H4 (TRX4) of Arabidopsis thaliana (Mouse-ear cress).